The primary structure comprises 392 residues: Succinate--CoA ligase [ADP-forming] subunit beta (392 aa).

In terms of domain architecture, ATP-grasp spans 9-244; the sequence is KALLAQYGVG…LSEEESSEIE (236 aa). ATP contacts are provided by residues K46, 53 to 55, E99, L102, and E107; that span reads GRG. Positions 199 and 213 each coordinate Mg(2+). Substrate contacts are provided by residues N264 and 321–323; that span reads GIV.

The protein belongs to the succinate/malate CoA ligase beta subunit family. In terms of assembly, heterotetramer of two alpha and two beta subunits. Mg(2+) serves as cofactor.

The enzyme catalyses succinate + ATP + CoA = succinyl-CoA + ADP + phosphate. The catalysed reaction is GTP + succinate + CoA = succinyl-CoA + GDP + phosphate. Its pathway is carbohydrate metabolism; tricarboxylic acid cycle; succinate from succinyl-CoA (ligase route): step 1/1. Succinyl-CoA synthetase functions in the citric acid cycle (TCA), coupling the hydrolysis of succinyl-CoA to the synthesis of either ATP or GTP and thus represents the only step of substrate-level phosphorylation in the TCA. The beta subunit provides nucleotide specificity of the enzyme and binds the substrate succinate, while the binding sites for coenzyme A and phosphate are found in the alpha subunit. This chain is Succinate--CoA ligase [ADP-forming] subunit beta, found in Wolinella succinogenes (strain ATCC 29543 / DSM 1740 / CCUG 13145 / JCM 31913 / LMG 7466 / NCTC 11488 / FDC 602W) (Vibrio succinogenes).